Consider the following 79-residue polypeptide: Hematopoietic cell signal transducer (79 aa).

Positions 1–18 (MAPPGGILFLLLLPVAAA) are cleaved as a signal peptide. The Extracellular portion of the chain corresponds to 19 to 35 (QVTSGSCSGCGPLSLPL). Residues 36-56 (LAGLVAADAVVSLLIVVGVFV) traverse the membrane as a helical segment. Residues 57–79 (CGRPRSRPTQEDGKIYINMPGRG) are Cytoplasmic-facing. Phosphotyrosine is present on Y72. The segment at 72–74 (YIN) is GRB2 binding site. Residues 72–75 (YINM) are PIK3R1 binding site.

This sequence belongs to the DAP10 family. In terms of assembly, homodimer; Disulfide-linked. Heterohexamer composed of four subunits of HCST/DAP10 and two subunits of KLRK1. Interacts (via transmembrane domain) with KLRK1 (via transmembrane domain); the interaction is required for KLRK1 NK cell surface and induces NK cell-mediated cytotoxicity. Interacts with PIK3R1 and GRB2. Interacts with CLEC5A. Forms an CLEC5A/TYROBP/HCST trimolecular complex depending almost solely on TYROBP. Interacts with KLRK1. Interacts with CD300H. Post-translationally, phosphorylated; PIK3R1 and GRB2 associate specifically with tyrosine-phosphorylated HCST. O-glycosylated. As to expression, expressed predominantly in lymphohematopoietic tissues.

The protein resides in the membrane. Transmembrane adapter protein which associates with KLRK1 to form an activation receptor KLRK1-HCST in lymphoid and myeloid cells; this receptor plays a major role in triggering cytotoxicity against target cells expressing cell surface ligands such as MHC class I chain-related MICA and MICB, and UL16-binding proteins (ULBPs); these ligands are up-regulated by stress conditions and pathological state such as viral infection and tumor transformation. Functions as a docking site for PI3-kinase PIK3R1 and GRB2. Interaction of ULBPs with KLRK1-HCST triggers calcium mobilization and activation of the PIK3R1, MAP2K/ERK, and JAK2/STAT5 signaling pathways. Both PIK3R1 and GRB2 are required for full KLRK1-HCST-mediated activation and ultimate killing of target cells. In NK cells, KLRK1-HCST signaling directly induces cytotoxicity and enhances cytokine production initiated via DAP12/TYROBP-associated receptors. In T-cells, it provides primarily costimulation for TCR-induced signals. KLRK1-HCST receptor plays a role in immune surveillance against tumors and is required for cytolysis of tumors cells; indeed, melanoma cells that do not express KLRK1 ligands escape from immune surveillance mediated by NK cells. This chain is Hematopoietic cell signal transducer (HCST), found in Sus scrofa (Pig).